Here is a 192-residue protein sequence, read N- to C-terminus: Pyridoxal 5'-phosphate synthase subunit PdxT (192 aa).

53–55 (GES) lines the L-glutamine pocket. Catalysis depends on Cys82, which acts as the Nucleophile. L-glutamine is bound by residues Arg108 and 134–135 (IR). Residues His170 and Glu172 each act as charge relay system in the active site.

This sequence belongs to the glutaminase PdxT/SNO family. In terms of assembly, in the presence of PdxS, forms a dodecamer of heterodimers. Only shows activity in the heterodimer.

It carries out the reaction aldehydo-D-ribose 5-phosphate + D-glyceraldehyde 3-phosphate + L-glutamine = pyridoxal 5'-phosphate + L-glutamate + phosphate + 3 H2O + H(+). It catalyses the reaction L-glutamine + H2O = L-glutamate + NH4(+). It participates in cofactor biosynthesis; pyridoxal 5'-phosphate biosynthesis. Its function is as follows. Catalyzes the hydrolysis of glutamine to glutamate and ammonia as part of the biosynthesis of pyridoxal 5'-phosphate. The resulting ammonia molecule is channeled to the active site of PdxS. The polypeptide is Pyridoxal 5'-phosphate synthase subunit PdxT (Methanosphaera stadtmanae (strain ATCC 43021 / DSM 3091 / JCM 11832 / MCB-3)).